The chain runs to 429 residues: Isocitrate dehydrogenase [NADP] (429 aa).

Residue threonine 108 participates in NADP(+) binding. D-threo-isocitrate contacts are provided by serine 117, asparagine 119, arginine 123, arginine 133, and arginine 156. Aspartate 308 serves as a coordination point for Mg(2+). Residues 340–346 (HGSAPKY), asparagine 353, tyrosine 393, and arginine 397 contribute to the NADP(+) site.

This sequence belongs to the isocitrate and isopropylmalate dehydrogenases family. Homodimer. It depends on Mg(2+) as a cofactor. Mn(2+) serves as cofactor.

It catalyses the reaction D-threo-isocitrate + NADP(+) = 2-oxoglutarate + CO2 + NADPH. Its function is as follows. Catalyzes the oxidative decarboxylation of isocitrate to 2-oxoglutarate and carbon dioxide with the concomitant reduction of NADP(+). The chain is Isocitrate dehydrogenase [NADP] (icd) from Caldococcus noboribetus.